A 51-amino-acid polypeptide reads, in one-letter code: Astexin-1 (51 aa).

A propeptide spanning residues 1–28 is cleaved from the precursor; that stretch reads MHTPIISETVQPKTAGLIVLGKASAETR. Positions 29–37 form a cross-link, isoaspartyl glycine isopeptide (Gly-Asp); sequence GLSQGVEPD.

In terms of processing, this lasso peptide is probably hydrolyzed to a linear form by the isopeptidase AtxE1, in vivo.

Shows weak antimicrobial activity against its phylogenetic relative Caulobacter crescentus. Does not show activity against other bacteria tested (E.coli, Vibrio sp, Burkhoderia thailandensis, and Salmonella newport). This chain is Astexin-1, found in Asticcacaulis excentricus (strain ATCC 15261 / DSM 4724 / KCTC 12464 / NCIMB 9791 / VKM B-1370 / CB 48).